The primary structure comprises 101 residues: UPF0473 protein str1961 (101 aa).

This sequence belongs to the UPF0473 family.

The protein is UPF0473 protein str1961 of Streptococcus thermophilus (strain CNRZ 1066).